Consider the following 88-residue polypeptide: Large ribosomal subunit protein bL27 (88 aa).

Residues 1–25 form a disordered region; the sequence is MAHKKGASSSRNGRDSNAQRLGVKR. Positions 7–19 are enriched in polar residues; the sequence is ASSSRNGRDSNAQ.

It belongs to the bacterial ribosomal protein bL27 family.

This chain is Large ribosomal subunit protein bL27, found in Nocardia farcinica (strain IFM 10152).